We begin with the raw amino-acid sequence, 340 residues long: Ferrochelatase (340 aa).

2 residues coordinate Fe cation: His202 and Glu283.

The protein belongs to the ferrochelatase family.

It localises to the cytoplasm. The enzyme catalyses heme b + 2 H(+) = protoporphyrin IX + Fe(2+). The protein operates within porphyrin-containing compound metabolism; protoheme biosynthesis; protoheme from protoporphyrin-IX: step 1/1. Its function is as follows. Catalyzes the ferrous insertion into protoporphyrin IX. This is Ferrochelatase from Acinetobacter baylyi (strain ATCC 33305 / BD413 / ADP1).